Consider the following 417-residue polypeptide: Serine hydroxymethyltransferase (417 aa).

Lysine 54 is subject to N6-acetyllysine. Residues leucine 121 and 125 to 127 (GHL) each bind (6S)-5,6,7,8-tetrahydrofolate. Lysine 229 is modified (N6-(pyridoxal phosphate)lysine). N6-acetyllysine occurs at positions 250, 285, and 354. 355–357 (SPF) contacts (6S)-5,6,7,8-tetrahydrofolate. Lysine 375 carries the N6-acetyllysine modification.

It belongs to the SHMT family. In terms of assembly, homodimer. Requires pyridoxal 5'-phosphate as cofactor.

It is found in the cytoplasm. The enzyme catalyses (6R)-5,10-methylene-5,6,7,8-tetrahydrofolate + glycine + H2O = (6S)-5,6,7,8-tetrahydrofolate + L-serine. It functions in the pathway one-carbon metabolism; tetrahydrofolate interconversion. It participates in amino-acid biosynthesis; glycine biosynthesis; glycine from L-serine: step 1/1. Functionally, catalyzes the reversible interconversion of serine and glycine with tetrahydrofolate (THF) serving as the one-carbon carrier. This reaction serves as the major source of one-carbon groups required for the biosynthesis of purines, thymidylate, methionine, and other important biomolecules. Also exhibits THF-independent aldolase activity toward beta-hydroxyamino acids, producing glycine and aldehydes, via a retro-aldol mechanism. The chain is Serine hydroxymethyltransferase from Escherichia coli O1:K1 / APEC.